An 88-amino-acid polypeptide reads, in one-letter code: Phosphocarrier protein HPr (88 aa).

In terms of domain architecture, HPr spans 1-88 (MAEKTFKVVS…DTLAKEGLAE (88 aa)). Ser12 is modified (phosphoserine). His15 functions as the Pros-phosphohistidine intermediate in the catalytic mechanism. Residue Ser46 is modified to Phosphoserine; by HPrK/P.

Belongs to the HPr family.

It localises to the cytoplasm. With respect to regulation, phosphorylation on Ser-46 inhibits the phosphoryl transfer from enzyme I to HPr. In terms of biological role, general (non sugar-specific) component of the phosphoenolpyruvate-dependent sugar phosphotransferase system (sugar PTS). This major carbohydrate active-transport system catalyzes the phosphorylation of incoming sugar substrates concomitantly with their translocation across the cell membrane. The phosphoryl group from phosphoenolpyruvate (PEP) is transferred to the phosphoryl carrier protein HPr by enzyme I. Phospho-HPr then transfers it to the PTS EIIA domain. Its function is as follows. P-Ser-HPr interacts with the catabolite control protein A (CcpA), forming a complex that binds to DNA at the catabolite response elements cre, operator sites preceding a large number of catabolite-regulated genes. Thus, P-Ser-HPr is a corepressor in carbon catabolite repression (CCR), a mechanism that allows bacteria to coordinate and optimize the utilization of available carbon sources. P-Ser-HPr also plays a role in inducer exclusion, in which it probably interacts with several non-PTS permeases and inhibits their transport activity. In Geobacillus stearothermophilus (Bacillus stearothermophilus), this protein is Phosphocarrier protein HPr (ptsH).